The following is a 418-amino-acid chain: Probable mitochondrial adenine nucleotide transporter BTL2 (418 aa).

3 Solcar repeats span residues 122 to 205 (MNTR…YRKQ), 215 to 300 (ATNF…LKSS), and 329 to 414 (LGPI…MKIV). Transmembrane regions (helical) follow at residues 127-147 (HLWA…PLER), 180-200 (GNLL…CAYD), 221-241 (FVAG…LDTI), 276-296 (LVPS…VYDI), 335-355 (LMYG…FEVV), and 383-403 (IPAL…SASI).

The protein belongs to the mitochondrial carrier (TC 2.A.29) family.

The protein resides in the mitochondrion inner membrane. Probable mitochondrial adenylate carrier that catalyzes the transport of ATP, ADP and AMP. In Arabidopsis thaliana (Mouse-ear cress), this protein is Probable mitochondrial adenine nucleotide transporter BTL2.